The chain runs to 458 residues: MSTGTVVQVIGAVVDVEFPHDAVPQVYDALEIKSEGLVLEVQQQLGGGVVRTIAMGSSDGLRRGLEVVNSGSPITVPVGEKTLGRIMNVLGQPVDEAGPIGEEDRYVIHREAPSYEDQSNTTELLETGIKVIDLVCPFAKGGKVGLFGGAGVGKTVNMMELINNIAKAHSGLSVFAGVGERTREGNDFYYEMEDSGVLDKVAMVYGQMNEPPGNRLRVALTGLTMAEKFRDEGKDVLFFVDNIYRYTLAGTEVSALLGRMPSAVGYQPTLAEEMGVLQERITSTKTGSITSVQAVYVPADDLTDPSPATTFAHLDATVVLSRNIASLGIYPAVDPLDSTSRQLDPQVVGQEHYDVANGVQTVLQRYKELKDIIAILGMDELSDEDKTTVFRARKIEKYLSQPFFVAEVFTGSPGKYVSLKDTIRGFKGILDGEFDHLPEQAFYMVGSIDEAVEKANKK.

Glycine 148 to threonine 155 contributes to the ATP binding site.

It belongs to the ATPase alpha/beta chains family. F-type ATPases have 2 components, CF(1) - the catalytic core - and CF(0) - the membrane proton channel. CF(1) has five subunits: alpha(3), beta(3), gamma(1), delta(1), epsilon(1). CF(0) has three main subunits: a(1), b(2) and c(9-12). The alpha and beta chains form an alternating ring which encloses part of the gamma chain. CF(1) is attached to CF(0) by a central stalk formed by the gamma and epsilon chains, while a peripheral stalk is formed by the delta and b chains.

It localises to the cell inner membrane. It carries out the reaction ATP + H2O + 4 H(+)(in) = ADP + phosphate + 5 H(+)(out). In terms of biological role, produces ATP from ADP in the presence of a proton gradient across the membrane. The catalytic sites are hosted primarily by the beta subunits. In Shewanella piezotolerans (strain WP3 / JCM 13877), this protein is ATP synthase subunit beta.